The primary structure comprises 344 residues: Glycerol-3-phosphate dehydrogenase [NAD(P)+] (344 aa).

NADPH-binding residues include serine 11, tryptophan 12, histidine 32, arginine 33, and lysine 106. Sn-glycerol 3-phosphate is bound by residues lysine 106, glycine 136, and serine 138. Alanine 140 serves as a coordination point for NADPH. Positions 192, 245, 255, 256, and 257 each coordinate sn-glycerol 3-phosphate. Lysine 192 (proton acceptor) is an active-site residue. Arginine 256 contacts NADPH. NADPH-binding residues include valine 280 and glutamate 282.

The protein belongs to the NAD-dependent glycerol-3-phosphate dehydrogenase family.

Its subcellular location is the cytoplasm. It carries out the reaction sn-glycerol 3-phosphate + NAD(+) = dihydroxyacetone phosphate + NADH + H(+). It catalyses the reaction sn-glycerol 3-phosphate + NADP(+) = dihydroxyacetone phosphate + NADPH + H(+). It participates in membrane lipid metabolism; glycerophospholipid metabolism. Catalyzes the reduction of the glycolytic intermediate dihydroxyacetone phosphate (DHAP) to sn-glycerol 3-phosphate (G3P), the key precursor for phospholipid synthesis. This Geobacillus kaustophilus (strain HTA426) protein is Glycerol-3-phosphate dehydrogenase [NAD(P)+].